The sequence spans 682 residues: Transcription activator of gluconeogenesis PODANS_4_8760 (682 aa).

The disordered stretch occupies residues 1–72 (MPEDGGPFGS…KDPLRPRRKK (72 aa)). Residues 9-21 (GSEAAEASGAMSE) are compositionally biased toward low complexity. 2 stretches are compositionally biased toward basic and acidic residues: residues 29–41 (HEPH…DRMS) and 54–67 (GEVK…DPLR). The segment at residues 77–105 (CYACQRAHLTCGDERPCQRCIKRGLQDSC) is a DNA-binding region (zn(2)-C6 fungal-type). 5 disordered regions span residues 122-148 (EALR…RHHS), 181-211 (LTES…SGMV), 325-375 (PAGP…RPSK), 509-541 (NRNT…AASG), and 586-622 (TDKP…HSIL). 3 stretches are compositionally biased toward polar residues: residues 185–206 (LPFN…SNPP), 329–345 (TSLQ…QPTT), and 354–373 (PTMS…NSRP).

Belongs to the ERT1/acuK family.

It localises to the nucleus. In terms of biological role, transcription factor which regulates nonfermentable carbon utilization. Activator of gluconeogenetic genes. This is Transcription activator of gluconeogenesis PODANS_4_8760 from Podospora anserina (strain S / ATCC MYA-4624 / DSM 980 / FGSC 10383) (Pleurage anserina).